The chain runs to 392 residues: Putative RNA-binding protein Luc7-like 2 (392 aa).

Phosphoserine is present on Ser18. Residues Glu102–Met177 are a coiled coil. Residues Lys235–Lys257 are compositionally biased toward basic and acidic residues. Residues Lys235 to Ile392 form a disordered region. Positions Leu258–His321 are enriched in basic residues. 2 positions are modified to 5-hydroxylysine; by JMJD6: Lys266 and Lys269. 2 stretches are compositionally biased toward basic and acidic residues: residues Lys337 to Arg364 and Arg377 to Ile392.

It belongs to the Luc7 family. Interacts with SCNM1. All isoforms are expressed in brain, kidney, heart, thymus, stomach, skeletal muscle, testis and spinal cord.

Its subcellular location is the nucleus speckle. It is found in the nucleus. The protein localises to the nucleoplasm. Functionally, may bind to RNA via its Arg/Ser-rich domain. In Mus musculus (Mouse), this protein is Putative RNA-binding protein Luc7-like 2 (Luc7l2).